A 161-amino-acid chain; its full sequence is Nucleotide-binding protein Reut_A2760 (161 aa).

This sequence belongs to the YajQ family.

Nucleotide-binding protein. This chain is Nucleotide-binding protein Reut_A2760, found in Cupriavidus pinatubonensis (strain JMP 134 / LMG 1197) (Cupriavidus necator (strain JMP 134)).